We begin with the raw amino-acid sequence, 106 residues long: Putative defensin-like protein 224 (106 aa).

The first 23 residues, methionine 1 to alanine 23, serve as a signal peptide directing secretion. Intrachain disulfides connect cysteine 60/cysteine 78, cysteine 64/cysteine 84, and cysteine 68/cysteine 86.

Belongs to the DEFL family.

The protein localises to the secreted. This is Putative defensin-like protein 224 from Arabidopsis thaliana (Mouse-ear cress).